The chain runs to 163 residues: MSKESSFDIVSKVELAEVNNAIQTALKEIENRFDFKGSKSSISLEKEELVLVSDDDFKLSQVKDILLGKLVKRDVPIKNLDYGKIEPAAGGTVRQRAKLVQGIDKDNAKKINSIIKDTGLKVKTQIQDDQIRVTGKSKDELQQIINAIRKADLPLEVQFINYR.

Belongs to the YajQ family.

Nucleotide-binding protein. The polypeptide is Nucleotide-binding protein BBR47_25280 (Brevibacillus brevis (strain 47 / JCM 6285 / NBRC 100599)).